Consider the following 264-residue polypeptide: S-adenosylmethionine decarboxylase proenzyme (264 aa).

The active-site Schiff-base intermediate with substrate; via pyruvic acid is Ser-112. Pyruvic acid (Ser); by autocatalysis is present on Ser-112. His-117 (proton acceptor; for processing activity) is an active-site residue. Catalysis depends on Cys-140, which acts as the Proton donor; for catalytic activity.

The protein belongs to the prokaryotic AdoMetDC family. Type 2 subfamily. In terms of assembly, heterooctamer of four alpha and four beta chains arranged as a tetramer of alpha/beta heterodimers. Requires pyruvate as cofactor. Post-translationally, is synthesized initially as an inactive proenzyme. Formation of the active enzyme involves a self-maturation process in which the active site pyruvoyl group is generated from an internal serine residue via an autocatalytic post-translational modification. Two non-identical subunits are generated from the proenzyme in this reaction, and the pyruvate is formed at the N-terminus of the alpha chain, which is derived from the carboxyl end of the proenzyme. The post-translation cleavage follows an unusual pathway, termed non-hydrolytic serinolysis, in which the side chain hydroxyl group of the serine supplies its oxygen atom to form the C-terminus of the beta chain, while the remainder of the serine residue undergoes an oxidative deamination to produce ammonia and the pyruvoyl group blocking the N-terminus of the alpha chain.

It carries out the reaction S-adenosyl-L-methionine + H(+) = S-adenosyl 3-(methylsulfanyl)propylamine + CO2. Its pathway is amine and polyamine biosynthesis; S-adenosylmethioninamine biosynthesis; S-adenosylmethioninamine from S-adenosyl-L-methionine: step 1/1. Catalyzes the decarboxylation of S-adenosylmethionine to S-adenosylmethioninamine (dcAdoMet), the propylamine donor required for the synthesis of the polyamines spermine and spermidine from the diamine putrescine. In Sodalis glossinidius (strain morsitans), this protein is S-adenosylmethionine decarboxylase proenzyme.